We begin with the raw amino-acid sequence, 165 residues long: Lipoprotein signal peptidase (165 aa).

3 helical membrane passes run 6–26 (SSVEIGDSMIYIFLFLILLII), 68–88 (GKIDIVSILAVIAIGLILFYF), and 95–115 (ISFLERIAYTMIFSGAIGNMI). Catalysis depends on residues D125 and D141. The chain crosses the membrane as a helical span at residues 132-152 (IWSFIFNFADVWINIGVVLII).

The protein belongs to the peptidase A8 family.

It localises to the cell inner membrane. It carries out the reaction Release of signal peptides from bacterial membrane prolipoproteins. Hydrolyzes -Xaa-Yaa-Zaa-|-(S,diacylglyceryl)Cys-, in which Xaa is hydrophobic (preferably Leu), and Yaa (Ala or Ser) and Zaa (Gly or Ala) have small, neutral side chains.. It functions in the pathway protein modification; lipoprotein biosynthesis (signal peptide cleavage). Its function is as follows. This protein specifically catalyzes the removal of signal peptides from prolipoproteins. This is Lipoprotein signal peptidase from Fusobacterium nucleatum subsp. nucleatum (strain ATCC 25586 / DSM 15643 / BCRC 10681 / CIP 101130 / JCM 8532 / KCTC 2640 / LMG 13131 / VPI 4355).